A 1131-amino-acid polypeptide reads, in one-letter code: MFQIPVENLDNIRKVRKKVKGILVDIGLDSCKELLKDLKGFDPGEKYFHNTSWGDVSLWEPSGKKVRYRTKPYCCGLCKYSTKVLTSFKNHLHRYHEDEIDQELVIPCPNCVFASQPKVVGRHFRMFHAPVRKVQNYTVNILGETKSSRSDVISFTCLKCNFSNTLYYSMKKHVLVAHFHYLINSYFGLRTEEMGEQPKTNDTVSIEKIPPPDKYYCKKCNANASSQDALMYHILTSDIHRDLENKLRSVISEHIKRTGLLKQTHIAPKPAAHLAAPANGSAPSAPAQPPCFHLALPQNSPSPAAGQPVTVAQGAPGSLTHSPPAAGQSHMTLVSSPLPVGQNSLTLQPPAPQPVFLSHGVPLHQSVNPPVLPLSQPVGPVNKSVGTSVLPINQTVRPGVLPLTQPVGPINRPVGPGVLPVSPSVTPGVLQAVSPGVLSVSRAVPSGVLPAGQMTPAGQMTPAGVIPGQTATSGVLPTGQMVQSGVLPVGQTAPSRVLPPGQTAPLRVISAGQVVPSGLLSPNQTVSSSAVVPVNQGVNSGVLQLSQPVVSGVLPVGQPVRPGVLQLNQTVGTNILPVNQPVRPGASQNTTFLTSGSILRQLIPTGKQVNGIPTYTLAPVSVTLPVPPGGLATVAPPQMPIQLLPSGAAAPMAGSMPGMPSPPVLVNAAQSVFVQASSSAADTNQVLKQAKQWKTCPVCNELFPSNVYQVHMEVAHKHSESKSGEKLEPEKLAACAPFLKWMREKTVRCLSCKCLVSEEELIHHLLMHGLGCLFCPCTFHDIKGLSEHSRNRHLGKKKLPMDYSNRGFQLDVDANGNLLFPHLDFITILPKEKLGEREVYLAILAGIHSKSLVPVYVKVRPQAEGTPGSTGKRVSTCPFCFGPFVTTEAYELHLKERHHIMPTVHTVLKSPAFKCIHCCGVYTGNMTLAAIAVHLVRCRSAPKDSSSDLQAQPGFIHNSELLLVSGEVMHDSSFSVKRKLPDGHLGAEDQRHGEEQPPILNADAAPGPEKVTSVVPFKRQRNESRTEGPIVKDEALQILALDPKKYEGRSYEEKKQFLKDYFHKKPYPSKKEIELLSSLFWVWKIDVASFFGKRRYICMKAIKNHKPSVLLGFDMSELKNVKHRLNFEYEP.

The C2H2-type 1 zinc finger occupies 73-96; that stretch reads YCCGLCKYSTKVLTSFKNHLHRYH. The C2H2-type 2; degenerate zinc-finger motif lies at 106–128; it reads IPCPNCVFASQPKVVGRHFRMFH. Glycyl lysine isopeptide (Lys-Gly) (interchain with G-Cter in SUMO2) cross-links involve residues Lys-118 and Lys-146. The C2H2-type 3; degenerate zinc-finger motif lies at 155-178; it reads FTCLKCNFSNTLYYSMKKHVLVAH. The segment at 215-240 adopts a C2H2-type 4 zinc-finger fold; the sequence is YYCKKCNANASSQDALMYHILTSDIH. The segment covering 274-285 has biased composition (low complexity); it reads LAAPANGSAPSA. A disordered region spans residues 274–329; that stretch reads LAAPANGSAPSAPAQPPCFHLALPQNSPSPAAGQPVTVAQGAPGSLTHSPPAAGQS. The C2H2-type 5; degenerate zinc-finger motif lies at 694 to 716; the sequence is KTCPVCNELFPSNVYQVHMEVAH. Residues 747–768 form a C2H2-type 6; degenerate zinc finger; it reads VRCLSCKCLVSEEELIHHLLMH. C2H2-type zinc fingers lie at residues 770-793 and 875-898; these read LGCLFCPCTFHDIKGLSEHSRNRH and STCPFCFGPFVTTEAYELHLKERH. The C2H2-type 9; degenerate zinc-finger motif lies at 913 to 937; the sequence is FKCIHCCGVYTGNMTLAAIAVHLVR. Residues Lys-979 and Lys-1018 each participate in a glycyl lysine isopeptide (Lys-Gly) (interchain with G-Cter in SUMO2) cross-link. Residue Ser-1024 is modified to Phosphoserine. Lys-1032 is covalently cross-linked (Glycyl lysine isopeptide (Lys-Gly) (interchain with G-Cter in SUMO1); alternate). Residue Lys-1032 forms a Glycyl lysine isopeptide (Lys-Gly) (interchain with G-Cter in SUMO2); alternate linkage. Positions 1043–1102 form a DNA-binding region, homeobox; sequence PKKYEGRSYEEKKQFLKDYFHKKPYPSKKEIELLSSLFWVWKIDVASFFGKRRYICMKAI.

The protein belongs to the krueppel C2H2-type zinc-finger protein family. In terms of assembly, may interact with SMARCA4/BRG1.

Its subcellular location is the nucleus. May be involved in transcriptional regulation. May play a role in neuronal function; perhaps involved in protection of brain tissues from oxidative stress. May be involved in erythroid differentiation. In Homo sapiens (Human), this protein is Activity-dependent neuroprotector homeobox protein 2 (ADNP2).